A 173-amino-acid chain; its full sequence is UPF0316 protein Bsph_0745 (173 aa).

3 helical membrane passes run Ile-4–Phe-24, Phe-31–Val-51, and Met-58–Ile-78.

Belongs to the UPF0316 family.

The protein resides in the cell membrane. The protein is UPF0316 protein Bsph_0745 of Lysinibacillus sphaericus (strain C3-41).